Here is a 131-residue protein sequence, read N- to C-terminus: Profilin (131 aa).

Belongs to the profilin family. Occurs in many kinds of cells as a complex with monomeric actin in a 1:1 ratio.

Its subcellular location is the cytoplasm. The protein localises to the cytoskeleton. Binds to actin and affects the structure of the cytoskeleton. At high concentrations, profilin prevents the polymerization of actin, whereas it enhances it at low concentrations. By binding to PIP2, it inhibits the formation of IP3 and DG. This is Profilin from Prunus dulcis (Almond).